A 958-amino-acid chain; its full sequence is N-terminal acetyltransferase B complex subunit NAA25 homolog (958 aa).

3 TPR repeats span residues 7 to 42 (AVLERRLRPIYDSLDSQQFKKALSDCDKVLKKHPNT), 78 to 111 (ELTLQAFVHCYRDSNQHMKVVTLYERIIQVDPSE), and 320 to 353 (FFAYKQIGKLTKQIPDMDDMTSIFGEQVDKMLEY).

It belongs to the MDM20/NAA25 family. In terms of assembly, component of the N-terminal acetyltransferase B (NatB) complex. Interacts with acer-1. As to expression, expressed in germline and somatic cells.

It is found in the cytoplasm. The protein localises to the nucleus. The protein resides in the chromosome. In terms of biological role, non-catalytic subunit of the NatB complex which catalyzes acetylation of the N-terminal methionine residues of proteins beginning with Met-Asp or Met-Glu. Required for chromosome organization and arrangement; specifically for assembly of the central region components of the synaptonemal complex onto chromosomes during meiosis and for DNA double stranded break formation and repair. Acts downstream of xnd-1 to regulate levels of histone acetylation in germ and somatic cell nuclei by controlling acetyl-CoA production through antagonizing the acetyl-CoA hydrolase activity of acer-1. The polypeptide is N-terminal acetyltransferase B complex subunit NAA25 homolog (Caenorhabditis elegans).